A 362-amino-acid chain; its full sequence is B3 domain-containing protein IDEF1 (362 aa).

The disordered stretch occupies residues 30 to 91 (VPFPNPFPAP…TPTPTPRGFA (62 aa)). The segment covering 48–70 (PHNHNHNHNHNHNIHNSHNHNHN) has biased composition (basic residues). A DNA-binding region (TF-B3) is located at residues 253 to 355 (LRKELTKSDV…KFIIRGEKAI (103 aa)).

Polyubiquitinated. Ubiquitination leads to its subsequent degradation via the proteasome pathway. Expressed in roots.

Its subcellular location is the nucleus. Its function is as follows. Transcription regulator involved in iron deficiency response and tolerance. May regulate directly iron transporters or other transcription factors involved in iron-deficiency response. Binds specifically to the DNA sequence 5'-CATGC-3' of the IDE1 element found in the promoter of the barley iron deficiency-inducible gene IDS2. This chain is B3 domain-containing protein IDEF1 (IDEF1), found in Oryza sativa subsp. japonica (Rice).